Consider the following 623-residue polypeptide: uncharacterized protein (623 aa).

Transmembrane regions (helical) follow at residues 242-262 (IVLA…ITWL), 288-308 (IVSP…LDIF), 318-338 (VSMW…IALF), 361-381 (VINL…LLGV), and 387-407 (FNVS…ALAV).

This sequence belongs to the MscS (TC 1.A.23) family.

It is found in the cell membrane. This is an uncharacterized protein from Helicobacter pylori (strain ATCC 700392 / 26695) (Campylobacter pylori).